A 377-amino-acid polypeptide reads, in one-letter code: MKNNIINLAQDLIRRPSISPADQGCQQVIAERLAQLGFTLEWLPFGDTLNLWAKHGSGSPVVAFAGHTDVVPVGDETQWTYPPFEARIVDNMLYGRGAADMKGSLSALVVAAEEFVKANPNHTGTVALLITSDEEAAAKDGTVKVVETLMARGEPIHYCVVGEPSSGKVLGDVIKNGRRGSITGELYIEGVQGHVAYPHLAENPVHTSLNFLTELTTYQWDNGNEFFPPTSLQIANIKAGTGSNNVIPGELYVQFNLRYCTEVTDEIIKNKVAEMLAKHQLKHRISWNLSGQPFLAGNGELVKATVQAVENVTKITPRLDTSGGTSDGRFIALMGAEVVEFGPLNATIHKVNECVSVEDLGKCGEVYYHILERLLKS.

His-67 provides a ligand contact to Zn(2+). Residue Asp-69 is part of the active site. Asp-100 serves as a coordination point for Zn(2+). Residue Glu-134 is the Proton acceptor of the active site. Positions 135, 163, and 349 each coordinate Zn(2+).

It belongs to the peptidase M20A family. DapE subfamily. In terms of assembly, homodimer. Requires Zn(2+) as cofactor. Co(2+) is required as a cofactor.

It catalyses the reaction N-succinyl-(2S,6S)-2,6-diaminopimelate + H2O = (2S,6S)-2,6-diaminopimelate + succinate. The protein operates within amino-acid biosynthesis; L-lysine biosynthesis via DAP pathway; LL-2,6-diaminopimelate from (S)-tetrahydrodipicolinate (succinylase route): step 3/3. In terms of biological role, catalyzes the hydrolysis of N-succinyl-L,L-diaminopimelic acid (SDAP), forming succinate and LL-2,6-diaminopimelate (DAP), an intermediate involved in the bacterial biosynthesis of lysine and meso-diaminopimelic acid, an essential component of bacterial cell walls. This Actinobacillus pleuropneumoniae serotype 3 (strain JL03) protein is Succinyl-diaminopimelate desuccinylase.